The chain runs to 261 residues: Ribosome biogenesis protein C3_06160C_A (261 aa).

A disordered region spans residues 1–38 (MPQNEYIEQHIKKHGRRLDYEERKRKKEAREGHRVAKD). Short sequence motifs (nuclear localization signal) lie at residues 11–18 (IKKHGRRL) and 51–58 (AKKRYAEK). Residues 17 to 37 (RLDYEERKRKKEAREGHRVAK) are compositionally biased toward basic and acidic residues. The segment at 59 to 85 (VAMKKKIKAHQESKVKGPSTPKAEDGE) is disordered.

The protein belongs to the eukaryotic ribosomal protein eS8 family. Ribosome biogenesis protein NSA2 subfamily. In terms of assembly, component of the pre-66S ribosomal particle. Interacts with NOP7 and RRP1. Interacts with RSA4 (via WD repeats).

It localises to the nucleus. The protein localises to the nucleolus. Involved in the biogenesis of the 60S ribosomal subunit. May play a part in the quality control of pre-60S particles. The chain is Ribosome biogenesis protein C3_06160C_A from Candida albicans (strain SC5314 / ATCC MYA-2876) (Yeast).